The following is a 244-amino-acid chain: Uridylate kinase (244 aa).

15–18 (KLSG) is a binding site for ATP. The interval 23–28 (GSEGFG) is involved in allosteric activation by GTP. G57 serves as a coordination point for UMP. Residues G58 and R62 each coordinate ATP. UMP-binding positions include D77 and 138 to 145 (TGNPFFTT). ATP is bound by residues T165, F171, and D174.

This sequence belongs to the UMP kinase family. Homohexamer.

Its subcellular location is the cytoplasm. It carries out the reaction UMP + ATP = UDP + ADP. Its pathway is pyrimidine metabolism; CTP biosynthesis via de novo pathway; UDP from UMP (UMPK route): step 1/1. Its activity is regulated as follows. Allosterically activated by GTP. Inhibited by UTP. Catalyzes the reversible phosphorylation of UMP to UDP. This chain is Uridylate kinase, found in Aeromonas hydrophila subsp. hydrophila (strain ATCC 7966 / DSM 30187 / BCRC 13018 / CCUG 14551 / JCM 1027 / KCTC 2358 / NCIMB 9240 / NCTC 8049).